A 119-amino-acid polypeptide reads, in one-letter code: Large ribosomal subunit protein bL20 (119 aa).

The protein belongs to the bacterial ribosomal protein bL20 family.

Binds directly to 23S ribosomal RNA and is necessary for the in vitro assembly process of the 50S ribosomal subunit. It is not involved in the protein synthesizing functions of that subunit. The polypeptide is Large ribosomal subunit protein bL20 (Dehalococcoides mccartyi (strain ATCC BAA-2100 / JCM 16839 / KCTC 5957 / BAV1)).